We begin with the raw amino-acid sequence, 631 residues long: Phosphomethylpyrimidine synthase (631 aa).

Residues Asn239, Met268, Tyr297, His333, 353–355, 394–397, and Glu433 each bind substrate; these read SRG and DGLR. His437 serves as a coordination point for Zn(2+). Tyr460 provides a ligand contact to substrate. His501 is a Zn(2+) binding site. Positions 581, 584, and 589 each coordinate [4Fe-4S] cluster.

This sequence belongs to the ThiC family. In terms of assembly, homodimer. [4Fe-4S] cluster serves as cofactor.

It carries out the reaction 5-amino-1-(5-phospho-beta-D-ribosyl)imidazole + S-adenosyl-L-methionine = 4-amino-2-methyl-5-(phosphooxymethyl)pyrimidine + CO + 5'-deoxyadenosine + formate + L-methionine + 3 H(+). The protein operates within cofactor biosynthesis; thiamine diphosphate biosynthesis. In terms of biological role, catalyzes the synthesis of the hydroxymethylpyrimidine phosphate (HMP-P) moiety of thiamine from aminoimidazole ribotide (AIR) in a radical S-adenosyl-L-methionine (SAM)-dependent reaction. This is Phosphomethylpyrimidine synthase from Salmonella enteritidis PT4 (strain P125109).